The primary structure comprises 218 residues: Octanoyltransferase (218 aa).

The 187-residue stretch at 32-218 (GDAPEAVWLL…LRTFSRSFPD (187 aa)) folds into the BPL/LPL catalytic domain. Substrate is bound by residues 71-78 (RGGQYTYH), 151-153 (AIG), and 164-166 (GLS). The active-site Acyl-thioester intermediate is C182.

This sequence belongs to the LipB family.

The protein resides in the cytoplasm. It carries out the reaction octanoyl-[ACP] + L-lysyl-[protein] = N(6)-octanoyl-L-lysyl-[protein] + holo-[ACP] + H(+). It participates in protein modification; protein lipoylation via endogenous pathway; protein N(6)-(lipoyl)lysine from octanoyl-[acyl-carrier-protein]: step 1/2. Functionally, catalyzes the transfer of endogenously produced octanoic acid from octanoyl-acyl-carrier-protein onto the lipoyl domains of lipoate-dependent enzymes. Lipoyl-ACP can also act as a substrate although octanoyl-ACP is likely to be the physiological substrate. The polypeptide is Octanoyltransferase (Cereibacter sphaeroides (strain ATCC 17025 / ATH 2.4.3) (Rhodobacter sphaeroides)).